The sequence spans 465 residues: FAD-dependent monooxygenase olcE (465 aa).

Residues 9–29 (IIIGGSVAGLTLALSLNKIGI) form a helical membrane-spanning segment. 5 residues coordinate FAD: Glu35, Gly49, Arg108, Asp308, and Ala321.

It belongs to the paxM FAD-dependent monooxygenase family. The cofactor is FAD.

Its subcellular location is the membrane. It functions in the pathway secondary metabolite biosynthesis; terpenoid biosynthesis. Functionally, FAD-dependent monooxygenase; part of the gene cluster that mediates the biosynthesis of 15-deoxyoxalicine B. The first step of the pathway is the synthesis of nicotinyl-CoA from nicotinic acid by the nicotinic acid-CoA ligase olcI. Nicotinyl-CoA is then a substrate of polyketide synthase olcA to produce 4-hydroxy-6-(3-pyridinyl)-2H-pyran-2-one (HPPO) which is further prenylated by the polyprenyl transferase olcH to yield geranylgeranyl-HPPO. Geranylgeranyl pyrophosphate is provided by the cluster-specific geranylgeranyl pyrophosphate synthase olcC. The FAD-dependent monooxygenase olcE catalyzes the epoxidation of geranylgeranyl-HPPO and the terpene cyclase olcD catalyzes the cyclization of the terpenoid component, resulting in the formation of the tricyclic terpene moiety seen in predecaturin E. The cytochrome P450 monooxygenase then catalyzes the allylic oxidation of predecaturin E, which is followed by spirocylization with concomitant loss of one molecule of water to form decaturin E. Decaturin E is the substrate of the cytochrome P450 monooxygenase olcJ which hydroxylates it at the C-29 position to form decaturin F. The short-chain dehydrogenase/reductase olcF may catalyze the oxidation of decaturin F to generate the 29-hydroxyl-27-one intermediate, and subsequent hemiacetal formation probably leads to the formation of decaturin C. The dioxygenase olcK may be a peroxisomal enzyme that catalyzes the hydroxylation of decaturin C into decaturin A once decaturin C is shuttled into the peroxisome by the MFS transporter olcL. Finally the cytochrome P450 monooxygenase olcB catalyzes the oxidative rearrangement to yield 15-deoxyoxalicine B. In the absence of olcJ, decaturin E may be shunted to a pathway in which it is oxidized to a ketone, possibly by olcF, to form decaturin D, which undergoes further allylic oxidation to yield decaturin G. Moreover, in the absence of oclK or oclL, oclB can convert decaturin C into 15-deoxyoxalicine A. In Penicillium canescens, this protein is FAD-dependent monooxygenase olcE.